Here is a 370-residue protein sequence, read N- to C-terminus: Aspartate-semialdehyde dehydrogenase 1 (370 aa).

NADP(+)-binding positions include 9 to 12 (RGMV), 36 to 37 (TS), and Gln-72. Arg-101 provides a ligand contact to phosphate. Residue Cys-134 is the Acyl-thioester intermediate of the active site. Cys-134 bears the S-cysteinyl cysteine; in inhibited form mark. Gln-161 contributes to the substrate binding site. NADP(+)-binding positions include 164–165 (SG) and Pro-192. Substrate is bound at residue Glu-240. Phosphate is bound at residue Lys-243. Arg-267 provides a ligand contact to substrate. Residue His-274 is the Proton acceptor of the active site. Gln-350 is an NADP(+) binding site.

The protein belongs to the aspartate-semialdehyde dehydrogenase family. As to quaternary structure, homodimer.

It catalyses the reaction L-aspartate 4-semialdehyde + phosphate + NADP(+) = 4-phospho-L-aspartate + NADPH + H(+). It participates in amino-acid biosynthesis; L-lysine biosynthesis via DAP pathway; (S)-tetrahydrodipicolinate from L-aspartate: step 2/4. Its pathway is amino-acid biosynthesis; L-methionine biosynthesis via de novo pathway; L-homoserine from L-aspartate: step 2/3. The protein operates within amino-acid biosynthesis; L-threonine biosynthesis; L-threonine from L-aspartate: step 2/5. With respect to regulation, inhibited by S-methyl-L-cysteine sulfoxide in vitro, via the formation of a covalently bound cysteine at the active site Cys-134. Its function is as follows. Catalyzes the NADPH-dependent formation of L-aspartate-semialdehyde (L-ASA) by the reductive dephosphorylation of L-aspartyl-4-phosphate. This is Aspartate-semialdehyde dehydrogenase 1 (asd1) from Vibrio cholerae serotype O1 (strain ATCC 39315 / El Tor Inaba N16961).